A 193-amino-acid chain; its full sequence is MRIAILGGTYNPVHIGHIFLAKEIEYLLNIDKIIFIPTCNPTHKLIGEGVSVKNRIDMLKLALKNENKMFIDDCDIINGGITYTIDTISCVKKKYKNDKLFLVIGDDLFQNFDSWKDPQSIASSVDLVVAHRIYKERLKSSFKHIYIDNKIIPISSSEIRNRIANGFPVSYLLPFGVLKYIKDNNLYVKKVNV.

This sequence belongs to the NadD family.

The catalysed reaction is nicotinate beta-D-ribonucleotide + ATP + H(+) = deamido-NAD(+) + diphosphate. It participates in cofactor biosynthesis; NAD(+) biosynthesis; deamido-NAD(+) from nicotinate D-ribonucleotide: step 1/1. Catalyzes the reversible adenylation of nicotinate mononucleotide (NaMN) to nicotinic acid adenine dinucleotide (NaAD). The protein is Probable nicotinate-nucleotide adenylyltransferase of Borreliella afzelii (strain PKo) (Borrelia afzelii).